Consider the following 862-residue polypeptide: Taxadiene synthase (862 aa).

The disordered stretch occupies residues 45 to 66 (RVKMSRGSGGPGPVVMMSSSTG). Residues Asp-613, Asp-617, Asn-757, Thr-761, and Glu-765 each coordinate Mg(2+). Residues 613–617 (DDMAD) carry the DDXXD motif motif.

It belongs to the terpene synthase family. The cofactor is Mg(2+).

It carries out the reaction (2E,6E,10E)-geranylgeranyl diphosphate = taxa-4(5),11(12)-diene + diphosphate. Its pathway is alkaloid biosynthesis; taxol biosynthesis; taxa-4(20),11-dien-5alpha-ol from geranylgeranyl diphosphate: step 1/2. In terms of biological role, catalyzes the cyclization of the ubiquitous isoprenoid intermediate geranylgeranyl diphosphate to taxa-4,11-diene, the parent olefin with a taxane skeleton. In Taxus chinensis (Chinese yew), this protein is Taxadiene synthase (TDC1).